The primary structure comprises 347 residues: MSINQQYVSGKSTEVRDVTIIGGGPTGIFAAVQCGMHHINCRIIDSMPSLGGQLTALYPEKHIYDVAGFPEVSAAGLIEQLWSQAARYKPEVVLGDKVVDVKKLDDGSFEVFTEKGHSYFSRAVLIAAGLGAFSPRKLPQLKDFEHLEETSIFYTVSSIDHFKDEKVVVVGGGDSALDWTIALLNVAEHVTLVHRMKEFQAHGKTVADAYEAQETGKLDIYLESEVASVLADSDRLTHAILKTPDEEITIEATRLLPLIGFRSNLGPIKNWGIEISGNGILVDNHMQTTVEGIYAAGDIAVYEGKLKLIQTGLSDAAMAVRHSLRYIKPGEKVKQQFSSQKASEKKA.

Positions 26, 45, 53, 58, 98, 133, 298, and 339 each coordinate FAD.

The protein belongs to the ferredoxin--NADP reductase type 2 family. In terms of assembly, homodimer. FAD is required as a cofactor.

The catalysed reaction is 2 reduced [2Fe-2S]-[ferredoxin] + NADP(+) + H(+) = 2 oxidized [2Fe-2S]-[ferredoxin] + NADPH. The sequence is that of Ferredoxin--NADP reductase 1 from Chloroherpeton thalassium (strain ATCC 35110 / GB-78).